Consider the following 277-residue polypeptide: S-formylglutathione hydrolase FrmB (277 aa).

Residues S145, D221, and H254 each act as charge relay system in the active site.

The protein belongs to the esterase D family.

The enzyme catalyses S-formylglutathione + H2O = formate + glutathione + H(+). Its function is as follows. Serine hydrolase involved in the detoxification of formaldehyde. Hydrolyzes S-formylglutathione to glutathione and formate. The chain is S-formylglutathione hydrolase FrmB (frmB) from Escherichia coli (strain SMS-3-5 / SECEC).